The primary structure comprises 70 residues: Small, acid-soluble spore protein I (70 aa).

This sequence belongs to the SspI family.

It is found in the spore core. This is Small, acid-soluble spore protein I from Bacillus cytotoxicus (strain DSM 22905 / CIP 110041 / 391-98 / NVH 391-98).